A 331-amino-acid chain; its full sequence is Adenosine deaminase (331 aa).

His12 and His14 together coordinate Zn(2+). Substrate contacts are provided by His14, Asp16, and Gly170. His197 contributes to the Zn(2+) binding site. Residue Glu200 is the Proton donor of the active site. Asp278 provides a ligand contact to Zn(2+).

This sequence belongs to the metallo-dependent hydrolases superfamily. Adenosine and AMP deaminases family. Adenosine deaminase subfamily. Zn(2+) serves as cofactor.

The enzyme catalyses adenosine + H2O + H(+) = inosine + NH4(+). It catalyses the reaction 2'-deoxyadenosine + H2O + H(+) = 2'-deoxyinosine + NH4(+). Catalyzes the hydrolytic deamination of adenosine and 2-deoxyadenosine. In Vibrio vulnificus (strain YJ016), this protein is Adenosine deaminase.